A 492-amino-acid chain; its full sequence is MDPYKHRPTSGANSAYWTTNSGAPVWNNNNALTVGHRGPILLEDYHLIEKLAQFDRERIPERVVHARGASAKGFFEVTHDVSQLTCADFLRAPGVQTPVIVRFSTVVHERGSPETLRDPRGFAVKFYTREGNFDLVGNNMPVFFIRDGMKFPDMVHAFKPSSKTNMQENWRVVDFFSHHPESLHMFTFLFDDVGIPLNYRHMDGFGVNTYTLISRDGKAHLVKFHWKPTCGVKCLLDDEAVTVGGTCHTHATKDLTDSIAAGNYPEWKLFIQTIDADHEDRFDFDPLDVTKTWPEDIIPLQPVGRMVLNKNIDNFFAENEQLAFCPAVTVPGIHYSDDKLLQTRIFSYADTQRHRLGPNYLMLPVNAPKCAHHNNHHDGLMNFIHRDEEVNYFPSRVDPTRHAEKDPMPPRVLSGCREKCIIDKENNFKQAGERYRSFDPARQDRFLQRWVDALTDARVTHEIQSIWVSYWSQCDASLGQKLASRLKIKPNM.

Active-site residues include histidine 65 and asparagine 138. Tyrosine 348 provides a ligand contact to heme.

The protein belongs to the catalase family. In terms of assembly, homotetramer. The cofactor is heme.

The protein localises to the cytoplasm. It localises to the cytosol. The protein resides in the peroxisome matrix. The catalysed reaction is 2 H2O2 = O2 + 2 H2O. Catalyzes the degradation of hydrogen peroxide (H(2)O(2)) generated by peroxisomal oxidases to water and oxygen, thereby protecting cells from the toxic effects of hydrogen peroxide. This is Catalase (CATA) from Triticum aestivum (Wheat).